The following is a 233-amino-acid chain: Small ribosomal subunit protein uS2 (233 aa).

It belongs to the universal ribosomal protein uS2 family.

The polypeptide is Small ribosomal subunit protein uS2 (Clostridium botulinum (strain Alaska E43 / Type E3)).